Consider the following 156-residue polypeptide: 1-methylthio-D-xylulose 5-phosphate methylsulfurylase (156 aa).

The Cupin type-2 domain occupies 55–122 (YFEVGPGGHS…ADEALGFLCM (68 aa)). 4 residues coordinate Mn(2+): Glu67, His69, His73, and His107. Cys121 is a catalytic residue.

The enzyme catalyses S-methyl-1-thio-D-xylulose 5-phosphate + glutathione = S-(methylsulfanyl)glutathione + 1-deoxy-D-xylulose 5-phosphate. It catalyses the reaction S-(methylsulfanyl)glutathione + AH2 = methanethiol + glutathione + A. Its pathway is amino-acid biosynthesis; L-methionine biosynthesis via salvage pathway. It participates in metabolic intermediate biosynthesis; 1-deoxy-D-xylulose 5-phosphate biosynthesis. Catalyzes the formation of S-(methylsulfanyl)glutathione and 1-deoxy-D-xylulose 5-phosphate (DXP) from 1-methylthioxylulose 5-phosphate (MTXu-5P). The S-(methylsulfanyl)glutathione is reductively cleaved to relase methanethiol in a second reaction. Involved in the MTA-isoprenoid shunt of the methionine salvage pathway. The protein is 1-methylthio-D-xylulose 5-phosphate methylsulfurylase of Rhodospirillum rubrum (strain ATCC 11170 / ATH 1.1.1 / DSM 467 / LMG 4362 / NCIMB 8255 / S1).